The following is a 390-amino-acid chain: Sister chromatid cohesion protein DCC1 (390 aa).

The protein belongs to the DCC1 family. In terms of assembly, component of the ctf18-RFC complex which consists of ctf18, ctf8, dscc1 and the RFC complex.

The protein localises to the nucleus. Its function is as follows. Loads pcna onto primed templates regulating velocity, spacing and restart activity of replication forks. May couple DNA replication to sister chromatid cohesion. This chain is Sister chromatid cohesion protein DCC1 (dscc1), found in Xenopus laevis (African clawed frog).